Reading from the N-terminus, the 621-residue chain is MIQEKKKFDAEVGKILNLMIHSLYSNKEIFMRELISNASDACDKLRYLSQSNSELVAGDSNFKITVKVDKDNGQIIIRDNGIGMNKDDLIENLGTIARSGTANFLKSLSGDSKKDNMLIGQFGVGFYSSFMVADKVTVTSRKAGEDKVHIWESDGLGEYTVSDSDKEFTRGTEIILHIKKEEDTFLDHFRLKHIVKSYSDHIAVPIYFFDEAGNNEIQLNSASALWTRPKSEITEEQYKEFYKSLSYAIDDPWITMHNKNEGAIEFTNLLFIPSSKTFDLFHPDRKRRVKLYIKRVFISDENIDLIPSYLRFLRGVVDSEDLPLNISRESLQHNSVLEKIKNAITKRVLGELRKKKEESPEEYNKFWANFGGALKEGLCEATTNHEKLLEVCIFRSALHNKMISLDEYIANFKEGQSTIYYLSGDNPDKLLSSPQIEGLLSKKIDVLLFTDTVDDFWVNVNSKYKEHAIKSATRSDIDVEQTTSQSEAKNTDSKKSDDEYKLLTDYFKETLGELVKEVKISKKLTSSPACLAVSDAAMDIRMERFLIEQKQIANASAKNLELNPKNKIIEKIFNDLKANNKNNEELVNLIFDQACILEGEPVADTGAFSKRLNDIVQKAIL.

The interval 1–328 (MIQEKKKFDA…SEDLPLNISR (328 aa)) is a; substrate-binding. The segment at 329–544 (ESLQHNSVLE…DAAMDIRMER (216 aa)) is b. A disordered region spans residues 475–494 (SDIDVEQTTSQSEAKNTDSK). The interval 545 to 621 (FLIEQKQIAN…LNDIVQKAIL (77 aa)) is c.

This sequence belongs to the heat shock protein 90 family. As to quaternary structure, homodimer.

It localises to the cytoplasm. In terms of biological role, molecular chaperone. Has ATPase activity. This Rickettsia rickettsii (strain Iowa) protein is Chaperone protein HtpG.